The primary structure comprises 517 residues: Arp2/3 complex-activating protein rickA (517 aa).

Disordered stretches follow at residues 313 to 441 (LENN…SKPA) and 461 to 517 (KVSD…SFVR). Composition is skewed to pro residues over residues 319–340 (PPSP…PSPL) and 347–378 (SSPP…PPMA). The 18-residue stretch at 406–423 (DTSDLMREIAGPKKLKKV) folds into the WH2 domain. Positions 444–477 (VNALSGLESIFARRAVIKVSDSSSSESDSGNWSD) are central and acidic domains. Low complexity predominate over residues 463-479 (SDSSSSESDSGNWSDVS). Residues 500-517 (THAQKINNRNSQNPSFVR) are compositionally biased toward polar residues.

In terms of assembly, homodimer.

The protein localises to the cell surface. Functionally, recruits and activates the Arp2/3 complex, which in turn leads to actin polymerization, promoting Rickettsia motility during infection. In Rickettsia conorii (strain ATCC VR-613 / Malish 7), this protein is Arp2/3 complex-activating protein rickA (rickA).